Consider the following 343-residue polypeptide: Annexin A1 isoform p37 (343 aa).

Glutamine 19 is covalently cross-linked (Isoglutamyl lysine isopeptide (Gln-Lys) (interchain with K-?)). Tyrosine 21 is subject to Phosphotyrosine; by EGFR; in vitro. Residue serine 24 is modified to Phosphoserine; by PKC; in vitro. 4 Annexin repeats span residues 38–109, 110–181, 193–265, and 269–340; these read FDPS…ALLK, TPAQ…VLAK, DLAD…ALVK, and SKPA…ALCG.

The protein belongs to the annexin family. Phosphorylated by protein kinase C and epidermal growth factor receptor/kinase. Post-translationally, the N-terminus is blocked.

It localises to the nucleus. The protein localises to the cytoplasm. It is found in the cell projection. Its subcellular location is the cilium. The protein resides in the basolateral cell membrane. In terms of biological role, calcium/phospholipid-binding protein which promotes membrane fusion and is involved in exocytosis. This protein regulates phospholipase A2 activity. It seems to bind from two to four calcium ions with high affinity. The polypeptide is Annexin A1 isoform p37 (CP37) (Columba livia (Rock dove)).